We begin with the raw amino-acid sequence, 152 residues long: MSCLPVLLLLQLLVSPGLQAPMTQTTSLKTSWVNCSNMIDEIITHLKQPPLPLLDFNNLNGEDQDILMENNLRRPNLEAFNKAVKSLQNASAIESILKNLPPCLPMATAAPTRHPIRIKDGDWNEFRRKLKFYLKTLENEQAQQMTLSLEIS.

A signal peptide spans M1–Q19. 2 N-linked (GlcNAc...) asparagine glycosylation sites follow: N34 and N89. A disulfide bridge links C35 with C103.

This sequence belongs to the IL-3 family. In terms of assembly, monomer. As to expression, activated T-cells, mast cells, natural killer cells.

The protein localises to the secreted. Functionally, granulocyte/macrophage colony-stimulating factors are cytokines that act in hematopoiesis by controlling the production, differentiation, and function of 2 related white cell populations of the blood, the granulocytes and the monocytes-macrophages. In terms of biological role, this CSF induces granulocytes, macrophages, mast cells, stem cells, erythroid cells, eosinophils and megakaryocytes. The sequence is that of Interleukin-3 (IL3) from Hylobates lar (Lar gibbon).